Consider the following 326-residue polypeptide: Beta-ketoacyl-[acyl-carrier-protein] synthase III (326 aa).

Active-site residues include Cys-111 and His-253. Residues 254 to 258 form an ACP-binding region; sequence QANSR. The active site involves Asn-283.

The protein belongs to the thiolase-like superfamily. FabH family. In terms of assembly, homodimer.

The protein resides in the cytoplasm. It catalyses the reaction malonyl-[ACP] + acetyl-CoA + H(+) = 3-oxobutanoyl-[ACP] + CO2 + CoA. It functions in the pathway lipid metabolism; fatty acid biosynthesis. Functionally, catalyzes the condensation reaction of fatty acid synthesis by the addition to an acyl acceptor of two carbons from malonyl-ACP. Catalyzes the first condensation reaction which initiates fatty acid synthesis and may therefore play a role in governing the total rate of fatty acid production. Possesses both acetoacetyl-ACP synthase and acetyl transacylase activities. Its substrate specificity determines the biosynthesis of branched-chain and/or straight-chain of fatty acids. This is Beta-ketoacyl-[acyl-carrier-protein] synthase III from Latilactobacillus sakei subsp. sakei (strain 23K) (Lactobacillus sakei subsp. sakei).